The chain runs to 782 residues: Translation initiation factor IF-2 (782 aa).

Residues 1-14 (MSKNIDDKNEDGKK) are compositionally biased toward basic and acidic residues. 2 disordered regions span residues 1-106 (MSKN…KKTY) and 132-174 (SIVS…AETE). Residues 15–25 (IKIIKLRKKVV) are compositionally biased toward basic residues. Residues 31-43 (NDLSGKNNPSGST) are compositionally biased toward polar residues. Residues 44 to 61 (DLHKHNNKVEYSHSRDGR) show a composition bias toward basic and acidic residues. Composition is skewed to polar residues over residues 86-106 (GYSQ…KKTY) and 133-142 (IVSSASSTDS). Over residues 143–159 (ENSKELNRKLGEKKKQQ) the composition is skewed to basic and acidic residues. Residues 280-453 (EKPPVITIMG…DMMLLKANPS (174 aa)) form the tr-type G domain. A G1 region spans residues 289-296 (GHVDHGKT). 289-296 (GHVDHGKT) contributes to the GTP binding site. Positions 314–318 (GITQH) are G2. The segment at 335–338 (DTPG) is G3. Residues 335 to 339 (DTPGH) and 389 to 392 (NKID) contribute to the GTP site. The G4 stretch occupies residues 389–392 (NKID). The tract at residues 425 to 427 (SAL) is G5.

It belongs to the TRAFAC class translation factor GTPase superfamily. Classic translation factor GTPase family. IF-2 subfamily.

The protein localises to the cytoplasm. One of the essential components for the initiation of protein synthesis. Protects formylmethionyl-tRNA from spontaneous hydrolysis and promotes its binding to the 30S ribosomal subunits. Also involved in the hydrolysis of GTP during the formation of the 70S ribosomal complex. The polypeptide is Translation initiation factor IF-2 (Borreliella afzelii (strain PKo) (Borrelia afzelii)).